The following is a 76-amino-acid chain: Protein OPG128 (76 aa).

An intrachain disulfide couples Cys17 to Cys21.

The protein belongs to the orthopoxvirus OPG128 family. As to quaternary structure, interacts with sulfhydryl oxidase OPG072; this interaction involves formation of a transient disulfide-bonded intermediate, allowing disulfide bond transfer. Interacts with OPG088; this interaction involves formation of a transient disulfide-bonded intermediate, allowing disulfide bond transfer.

Functionally, late protein which probably participates in disulfide bond formation by functioning as a thiol-disulfide transfer protein between membrane-associated OPG072 and OPG08. The complete pathway for formation of disulfide bonds in intracellular virion membrane proteins sequentially involves oxidation of OPG072, OPG128 and OPG08. This chain is Protein OPG128 (OPG128), found in Homo sapiens (Human).